A 258-amino-acid polypeptide reads, in one-letter code: Type III pantothenate kinase (258 aa).

An ATP-binding site is contributed by 6-13 (DAGNTRIK). Substrate contacts are provided by residues Tyr98 and 105 to 108 (GSDR). Asp107 (proton acceptor) is an active-site residue. Thr131 lines the ATP pocket. Residue Thr184 participates in substrate binding.

This sequence belongs to the type III pantothenate kinase family. Homodimer. Requires NH4(+) as cofactor. The cofactor is K(+).

It is found in the cytoplasm. It catalyses the reaction (R)-pantothenate + ATP = (R)-4'-phosphopantothenate + ADP + H(+). It participates in cofactor biosynthesis; coenzyme A biosynthesis; CoA from (R)-pantothenate: step 1/5. Catalyzes the phosphorylation of pantothenate (Pan), the first step in CoA biosynthesis. The polypeptide is Type III pantothenate kinase (Herminiimonas arsenicoxydans).